The following is a 344-amino-acid chain: Polycomb group RING finger protein 2 (344 aa).

The segment at 18–57 (CALCGGYFIDATTIVECLHSFCKTCIVRYLETNKYCPMCD) adopts an RING-type zinc-finger fold. Residues lysine 51 and lysine 88 each participate in a glycyl lysine isopeptide (Lys-Gly) (interchain with G-Cter in SUMO2) cross-link. A Nuclear localization signal motif is present at residues 81–95 (KLVPGLFKDEMKRRR). The segment covering 240–253 (TVPTPSEGTNTSGA) has biased composition (polar residues). The interval 240 to 344 (TVPTPSEGTN…VNGAPVPPLT (105 aa)) is disordered. The span at 263–313 (APSPATLPATSSSLPSPATPSHGSPSSHGPPATHPTSPTPPSTASGATTAA) shows a compositional bias: low complexity. Polar residues predominate over residues 314-328 (NGGSLNCLQTPSSTS). Threonine 344 carries the post-translational modification Phosphothreonine.

Exists as both a monomer and homodimer. Component of a PRC1-like complex. Interacts with CBX8, RING1 and RNF2. Interacts with CBX7. Interacts with PHC2. In terms of processing, phosphorylated. Homodimer formation is regulated by phosphorylation with only unphosphorylated proteins forming homodimers. As to expression, detected in all tissues examined with high expression found in placenta lung and kidney and low expression, in liver, pancreas and skeletal muscle.

It is found in the nucleus. Its function is as follows. Transcriptional repressor. Binds specifically to the DNA sequence 5'-GACTNGACT-3'. Has tumor suppressor activity. May play a role in control of cell proliferation and/or neural cell development. Regulates proliferation of early T progenitor cells by maintaining expression of HES1. Also plays a role in antero-posterior specification of the axial skeleton and negative regulation of the self-renewal activity of hematopoietic stem cells. Component of a Polycomb group (PcG) multiprotein PRC1-like complex, a complex class required to maintain the transcriptionally repressive state of many genes, including Hox genes, throughout development. PcG PRC1 complex acts via chromatin remodeling and modification of histones; it mediates monoubiquitination of histone H2A 'Lys-119', rendering chromatin heritably changed in its expressibility. Within the PRC1-like complex, regulates RNF2 ubiquitin ligase activity. The polypeptide is Polycomb group RING finger protein 2 (PCGF2) (Homo sapiens (Human)).